The following is a 218-amino-acid chain: Serine/threonine-protein phosphatase 2 (218 aa).

Mn(2+)-binding residues include Asp22, His24, Asp51, and Asn77. His78 (proton donor) is an active-site residue. His187 lines the Mn(2+) pocket.

This sequence belongs to the PPP phosphatase family. PP-1 subfamily. Mn(2+) serves as cofactor.

The enzyme catalyses O-phospho-L-seryl-[protein] + H2O = L-seryl-[protein] + phosphate. It carries out the reaction O-phospho-L-threonyl-[protein] + H2O = L-threonyl-[protein] + phosphate. With respect to regulation, inhibited by cadmium, copper, zinc when added activity but with less efficiency. Its function is as follows. Can hydrolyze phosphorylated Ser-, Thr- or Tyr-substrates in vitro. The natural substrate is unknown. The chain is Serine/threonine-protein phosphatase 2 (pphB) from Salmonella typhimurium (strain LT2 / SGSC1412 / ATCC 700720).